Here is a 150-residue protein sequence, read N- to C-terminus: 3-hydroxyacyl-[acyl-carrier-protein] dehydratase FabZ (150 aa).

The active site involves His-54.

This sequence belongs to the thioester dehydratase family. FabZ subfamily.

Its subcellular location is the cytoplasm. The enzyme catalyses a (3R)-hydroxyacyl-[ACP] = a (2E)-enoyl-[ACP] + H2O. Functionally, involved in unsaturated fatty acids biosynthesis. Catalyzes the dehydration of short chain beta-hydroxyacyl-ACPs and long chain saturated and unsaturated beta-hydroxyacyl-ACPs. This Vibrio atlanticus (strain LGP32) (Vibrio splendidus (strain Mel32)) protein is 3-hydroxyacyl-[acyl-carrier-protein] dehydratase FabZ.